The following is a 230-amino-acid chain: Probable methylthioribulose-1-phosphate dehydratase (230 aa).

Cysteine 87 is a binding site for substrate. Zn(2+) is bound by residues histidine 105 and histidine 107. The active-site Proton donor/acceptor is the glutamate 129. Histidine 185 is a binding site for Zn(2+).

This sequence belongs to the aldolase class II family. MtnB subfamily. The cofactor is Zn(2+).

The protein localises to the cytoplasm. It carries out the reaction 5-(methylsulfanyl)-D-ribulose 1-phosphate = 5-methylsulfanyl-2,3-dioxopentyl phosphate + H2O. It functions in the pathway amino-acid biosynthesis; L-methionine biosynthesis via salvage pathway; L-methionine from S-methyl-5-thio-alpha-D-ribose 1-phosphate: step 2/6. Functionally, catalyzes the dehydration of methylthioribulose-1-phosphate (MTRu-1-P) into 2,3-diketo-5-methylthiopentyl-1-phosphate (DK-MTP-1-P). The sequence is that of Probable methylthioribulose-1-phosphate dehydratase from Drosophila pseudoobscura pseudoobscura (Fruit fly).